The chain runs to 263 residues: Protein M1627_2099 (263 aa).

Belongs to the CinA family.

The chain is Protein M1627_2099 from Saccharolobus islandicus (strain M.16.27) (Sulfolobus islandicus).